The sequence spans 450 residues: uncharacterized protein (450 aa).

This sequence belongs to the herpesviridae BBLF2 family.

This is an uncharacterized protein from Saimiriine herpesvirus 2 (strain 11) (SaHV-2).